The sequence spans 446 residues: Na(+)-translocating NADH-quinone reductase subunit A (446 aa).

The protein belongs to the NqrA family. As to quaternary structure, composed of six subunits; NqrA, NqrB, NqrC, NqrD, NqrE and NqrF.

The catalysed reaction is a ubiquinone + n Na(+)(in) + NADH + H(+) = a ubiquinol + n Na(+)(out) + NAD(+). Functionally, NQR complex catalyzes the reduction of ubiquinone-1 to ubiquinol by two successive reactions, coupled with the transport of Na(+) ions from the cytoplasm to the periplasm. NqrA to NqrE are probably involved in the second step, the conversion of ubisemiquinone to ubiquinol. The chain is Na(+)-translocating NADH-quinone reductase subunit A from Vibrio anguillarum (Listonella anguillarum).